Consider the following 146-residue polypeptide: MGFTAQQDALVGSSYEAFKQNLPSNSVLFYTLILEKAPAAKDMFSFLKASGPTHSPQLQAHAEKVFGLTRDAAAQLLAKGEVTLADASLGAVHVQKAVADPHFAVVKEALLKTVQAAVGDKWSEELSTAWGVAYDGLAAAIKKAMS.

A Globin domain is found at G2–S146. Y30 is modified (nitrated tyrosine). S45 contributes to the heme b binding site. S45 carries the phosphoserine modification. H61 contributes to the O2 binding site. Positions 64, 93, and 96 each coordinate heme b. Y134 carries the nitrated tyrosine modification.

This sequence belongs to the plant globin family. Monomer. Post-translationally, nitrated in effective nodules and particularly in hypoxic conditions; this mechanism may play a protective role in the symbiosis by buffering toxic peroxynitrite NO(2)(-). Nitration level decrease during nodule senescence. Phosphorylation at Ser-45 disrupts the molecular environment of its porphyrin ring oxygen binding pocket, thus leading to a reduced oxygen consumption and to the delivery of oxygen O(2) to symbiosomes. Specifically and strongly expressed in root nodules and at low levels in seedlings.

It is found in the cytoplasm. It localises to the cytosol. The protein localises to the nucleus. In terms of biological role, leghemoglobin that reversibly binds oxygen O(2) through a pentacoordinated heme iron. In root nodules, facilitates the diffusion of oxygen to the bacteroids while preventing the bacterial nitrogenase from being inactivated by buffering dioxygen, nitric oxide and carbon monoxide, and promoting the formation of reactive oxygen species (ROS, e.g. H(2)O(2)). This role is essential for symbiotic nitrogen fixation (SNF). In Lotus japonicus (Lotus corniculatus var. japonicus), this protein is Leghemoglobin 2.